The chain runs to 1099 residues: Adenylate cyclase type 7 (1099 aa).

Residues 1–33 lie on the Cytoplasmic side of the membrane; sequence MPAKGRYFLNEGDEGPDQAALYEKYRLTSLHGP. 6 consecutive transmembrane segments (helical) span residues 34-54, 63-83, 95-117, 122-142, 147-167, and 178-198; these read LLLL…SIAF, QVVL…YVLV, ALAL…DSLE, AWEQ…LLPL, AIVA…AVTR, and LGLQ…TGAF. Residues 199-595 lie on the Cytoplasmic side of the membrane; it reads HKHQLQDASR…YRLVPIPRAR (397 aa). Residues Asp-286, Ile-287, and Asp-330 each coordinate Mg(2+). Residues 286 to 291, 328 to 330, and Arg-374 each bind ATP; these read DIVGFT and LGD. The disordered stretch occupies residues 456-476; sequence DPRSQQPPPPSHHLSKPKGDA. A mediates regulation of adenylate cyclase activity by C5 alpha-induced G- beta and gamma pathway region spans residues 479 to 484; sequence KMRASV. Positions 493–501 are mediates regulation of adenylate cyclase activity by sphingosine 1-phosphate-induced G alpha 13 pathway; it reads WGAARPFAH. The interval 504-543 is disordered; that stretch reads HRESVSSSETPISNGRRQKAIPLRRHRAPDRSASPKGRLE. The segment covering 508-518 has biased composition (polar residues); sequence VSSSETPISNG. The segment at 508–585 is modulates adenylate cyclase activity by modulating the binding of G(s)alpha to the high-affinity G(s)alpha binding site in 7C1a/7C2; the sequence is VSSSETPISN…IFLEKGFERE (78 aa). Residues 519–531 are compositionally biased toward basic residues; the sequence is RRQKAIPLRRHRA. 3 consecutive transmembrane segments (helical) span residues 596 to 616, 621 to 641, and 670 to 689; these read YDFA…LLVM, TLGV…SFCF, and LVLV…INMP. An N-linked (GlcNAc...) asparagine glycan is attached at Asn-702. 3 helical membrane passes run 719 to 738, 747 to 766, and 813 to 833; these read LLPY…SVFL, MLLT…SPCW, and DLKI…ILLS. The Cytoplasmic segment spans residues 834 to 1099; sequence RQIDYYCRLD…TAKFQGLGLN (266 aa). Residues Lys-950, 1029–1031, 1036–1040, and Lys-1076 contribute to the ATP site; these read DIW and NVASR.

Belongs to the adenylyl cyclase class-4/guanylyl cyclase family. Requires Mg(2+) as cofactor. It depends on Mn(2+) as a cofactor. Post-translationally, phosphorylated by PRKCD. In terms of tissue distribution, most abundant in heart, spleen and lung.

Its subcellular location is the membrane. The enzyme catalyses ATP = 3',5'-cyclic AMP + diphosphate. With respect to regulation, activated by the G protein alpha subunit. Activated by the G protein beta and gamma subunit complex. Activated by GNA13 and GNA12. Ethanol and phorbol 12,13-dibutanoate significantly potentiate adenylate cyclase activity generated in response to the activation of the prostanoid receptor by the agonist prostaglandin E1(1-) in a PKC-dependent manner. Inhibited by lithium. In terms of biological role, catalyzes the formation of cAMP in response to activation of G protein-coupled receptors. Functions in signaling cascades activated namely by thrombin and sphingosine 1-phosphate and mediates regulation of cAMP synthesis through synergistic action of the stimulatory G alpha protein with GNA13. Also, during inflammation, mediates zymosan-induced increase intracellular cAMP, leading to protein kinase A pathway activation in order to modulate innate immune responses through heterotrimeric G proteins G(12/13). Functions in signaling cascades activated namely by dopamine and C5 alpha chain and mediates regulation of cAMP synthesis through synergistic action of the stimulatory G protein with G beta:gamma complex. Functions, through cAMP response regulation, to keep inflammation under control during bacterial infection by sensing the presence of serum factors, such as the bioactive lysophospholipid (LPA) that regulate LPS-induced TNF-alpha production. However, it is also required for the optimal functions of B and T cells during adaptive immune responses by regulating cAMP synthesis in both B and T cells. In Mus musculus (Mouse), this protein is Adenylate cyclase type 7.